A 589-amino-acid polypeptide reads, in one-letter code: Putative adenine deaminase BC_3012 (589 aa).

Belongs to the metallo-dependent hydrolases superfamily. Adenine deaminase family.

It catalyses the reaction adenine + H2O + H(+) = hypoxanthine + NH4(+). In Bacillus cereus (strain ATCC 14579 / DSM 31 / CCUG 7414 / JCM 2152 / NBRC 15305 / NCIMB 9373 / NCTC 2599 / NRRL B-3711), this protein is Putative adenine deaminase BC_3012.